A 530-amino-acid chain; its full sequence is UDP-glucuronosyltransferase 2A3 (530 aa).

A signal peptide spans 1 to 23 (MAPGKLASAVLLLLLCCAGSGFC). At 24–494 (GKVLVWPCEM…SWFQYHSLDV (471 aa)) the chain is on the extracellular side. Residue Asn-316 is glycosylated (N-linked (GlcNAc...) asparagine). The helical transmembrane segment at 495 to 515 (IGFLLACVASAILLVTKCCLF) threads the bilayer. At 516–530 (SFQNFIKIGKRIKKE) the chain is on the cytoplasmic side.

This sequence belongs to the UDP-glycosyltransferase family. Specifically expressed in liver and small intestine.

It localises to the membrane. The catalysed reaction is glucuronate acceptor + UDP-alpha-D-glucuronate = acceptor beta-D-glucuronoside + UDP + H(+). In terms of biological role, UDP-glucuronosyltransferases catalyze phase II biotransformation reactions in which lipophilic substrates are conjugated with glucuronic acid to increase water solubility and enhance excretion. They are of major importance in the conjugation and subsequent elimination of potentially toxic xenobiotics and endogenous compounds. This chain is UDP-glucuronosyltransferase 2A3 (UGT2A3), found in Cavia porcellus (Guinea pig).